A 253-amino-acid polypeptide reads, in one-letter code: uncharacterized protein (253 aa).

10–35 (ISGAASKRGIGRATAELFASHGARVA) serves as a coordination point for NADP(+). A substrate-binding site is contributed by Ser144. The active-site Proton acceptor is Tyr159.

This sequence belongs to the short-chain dehydrogenases/reductases (SDR) family.

This is an uncharacterized protein from Sinorhizobium fredii (strain NBRC 101917 / NGR234).